The primary structure comprises 480 residues: Lysosomal protective protein (480 aa).

An N-terminal signal peptide occupies residues 1 to 28 (MIRAAPPPLFLLLLLLLLLVSWASRGEA). 4 disulfide bridges follow: C88–C362, C240–C256, C241–C246, and C281–C331. N145 is a glycosylation site (N-linked (GlcNAc...) asparagine). The active site involves S178. N333 is a glycosylation site (N-linked (GlcNAc...) asparagine). Residues D400 and H457 contribute to the active site.

Belongs to the peptidase S10 family. In terms of assembly, heterodimer of a 32 kDa chain and a 20 kDa chain; disulfide-linked.

Its subcellular location is the lysosome. The catalysed reaction is Release of a C-terminal amino acid with broad specificity.. Functionally, protective protein appears to be essential for both the activity of beta-galactosidase and neuraminidase, it associates with these enzymes and exerts a protective function necessary for their stability and activity. This protein is also a carboxypeptidase and can deamidate tachykinins. This Homo sapiens (Human) protein is Lysosomal protective protein (CTSA).